A 339-amino-acid polypeptide reads, in one-letter code: Ribosomal RNA small subunit methyltransferase H (339 aa).

S-adenosyl-L-methionine-binding positions include Gly-36–Tyr-38, Asp-55, Phe-82, Asp-103, and Gln-110. Residues Gly-286–Pro-319 form a disordered region.

It belongs to the methyltransferase superfamily. RsmH family.

Its subcellular location is the cytoplasm. It carries out the reaction cytidine(1402) in 16S rRNA + S-adenosyl-L-methionine = N(4)-methylcytidine(1402) in 16S rRNA + S-adenosyl-L-homocysteine + H(+). Its function is as follows. Specifically methylates the N4 position of cytidine in position 1402 (C1402) of 16S rRNA. The protein is Ribosomal RNA small subunit methyltransferase H of Methylobacterium nodulans (strain LMG 21967 / CNCM I-2342 / ORS 2060).